We begin with the raw amino-acid sequence, 307 residues long: Thymidylate synthase (307 aa).

Residues Arg26 and 160–161 (RR) each bind dUMP. Residue Cys180 is the Nucleophile of the active site. Residues 209-212 (RSCD), Asn220, and 250-252 (HIY) each bind dUMP. Asp212 is a binding site for (6R)-5,10-methylene-5,6,7,8-tetrahydrofolate. Residue Ala306 coordinates (6R)-5,10-methylene-5,6,7,8-tetrahydrofolate.

Belongs to the thymidylate synthase family. Bacterial-type ThyA subfamily. In terms of assembly, homodimer.

It is found in the cytoplasm. The enzyme catalyses dUMP + (6R)-5,10-methylene-5,6,7,8-tetrahydrofolate = 7,8-dihydrofolate + dTMP. It participates in pyrimidine metabolism; dTTP biosynthesis. In terms of biological role, catalyzes the reductive methylation of 2'-deoxyuridine-5'-monophosphate (dUMP) to 2'-deoxythymidine-5'-monophosphate (dTMP) while utilizing 5,10-methylenetetrahydrofolate (mTHF) as the methyl donor and reductant in the reaction, yielding dihydrofolate (DHF) as a by-product. This enzymatic reaction provides an intracellular de novo source of dTMP, an essential precursor for DNA biosynthesis. The polypeptide is Thymidylate synthase (Rhizobium rhizogenes (strain K84 / ATCC BAA-868) (Agrobacterium radiobacter)).